A 336-amino-acid chain; its full sequence is Methionine synthase (336 aa).

Residues His-210, Cys-212, Glu-234, and Cys-294 each contribute to the Zn(2+) site.

The protein belongs to the archaeal MetE family. Requires Zn(2+) as cofactor.

The protein operates within amino-acid biosynthesis; L-methionine biosynthesis via de novo pathway. Catalyzes the transfer of a methyl group to L-homocysteine resulting in methionine formation. The physiological methyl donor is unknown. This is Methionine synthase from Thermococcus kodakarensis (strain ATCC BAA-918 / JCM 12380 / KOD1) (Pyrococcus kodakaraensis (strain KOD1)).